Consider the following 586-residue polypeptide: Arrestin-related trafficking adapter 5 (586 aa).

Disordered regions lie at residues 123–145 (GENA…DMDT) and 182–217 (ENGV…YSNR). Polar residues predominate over residues 126-145 (AENQHNSSSGRSTSNQDMDT). Over residues 199 to 216 (SRSSSSNTLNNNSHSYSN) the composition is skewed to low complexity. Lys364 participates in a covalent cross-link: Glycyl lysine isopeptide (Lys-Gly) (interchain with G-Cter in ubiquitin).

This sequence belongs to the arrestin family. In terms of assembly, interacts with RSP5. Ubiquitinated by RSP5.

In terms of biological role, may regulate endocytosis by recruiting RSP5 ubiquitin ligase activity to specific plasma membrane proteins in response to extracellular stimuli. The protein is Arrestin-related trafficking adapter 5 (ART5) of Saccharomyces cerevisiae (strain ATCC 204508 / S288c) (Baker's yeast).